A 239-amino-acid chain; its full sequence is 2-C-methyl-D-erythritol 4-phosphate cytidylyltransferase (239 aa).

This sequence belongs to the IspD/TarI cytidylyltransferase family. IspD subfamily.

It catalyses the reaction 2-C-methyl-D-erythritol 4-phosphate + CTP + H(+) = 4-CDP-2-C-methyl-D-erythritol + diphosphate. It participates in isoprenoid biosynthesis; isopentenyl diphosphate biosynthesis via DXP pathway; isopentenyl diphosphate from 1-deoxy-D-xylulose 5-phosphate: step 2/6. In terms of biological role, catalyzes the formation of 4-diphosphocytidyl-2-C-methyl-D-erythritol from CTP and 2-C-methyl-D-erythritol 4-phosphate (MEP). This is 2-C-methyl-D-erythritol 4-phosphate cytidylyltransferase from Acinetobacter baylyi (strain ATCC 33305 / BD413 / ADP1).